We begin with the raw amino-acid sequence, 183 residues long: Holliday junction branch migration complex subunit RuvA (183 aa).

Positions 1–63 are domain I; it reads MIVGLIGVVE…EDANLLYGFL (63 aa). The tract at residues 64-139 is domain II; sequence EESEKILFER…FFIQDENRPA (76 aa). A region of interest (flexible linker) is located at residue alanine 139. Residues 139-183 form a domain III region; it reads ARNEVFLALESLGFKSAEINKVLKTLKPNLSIEAAIKEALQQLRS.

It belongs to the RuvA family. In terms of assembly, homotetramer. Forms an RuvA(8)-RuvB(12)-Holliday junction (HJ) complex. HJ DNA is sandwiched between 2 RuvA tetramers; dsDNA enters through RuvA and exits via RuvB. An RuvB hexamer assembles on each DNA strand where it exits the tetramer. Each RuvB hexamer is contacted by two RuvA subunits (via domain III) on 2 adjacent RuvB subunits; this complex drives branch migration. In the full resolvosome a probable DNA-RuvA(4)-RuvB(12)-RuvC(2) complex forms which resolves the HJ.

The protein localises to the cytoplasm. In terms of biological role, the RuvA-RuvB-RuvC complex processes Holliday junction (HJ) DNA during genetic recombination and DNA repair, while the RuvA-RuvB complex plays an important role in the rescue of blocked DNA replication forks via replication fork reversal (RFR). RuvA specifically binds to HJ cruciform DNA, conferring on it an open structure. The RuvB hexamer acts as an ATP-dependent pump, pulling dsDNA into and through the RuvAB complex. HJ branch migration allows RuvC to scan DNA until it finds its consensus sequence, where it cleaves and resolves the cruciform DNA. This chain is Holliday junction branch migration complex subunit RuvA, found in Helicobacter pylori (strain HPAG1).